The following is a 415-amino-acid chain: Gamma-glutamyl phosphate reductase (415 aa).

This sequence belongs to the gamma-glutamyl phosphate reductase family.

Its subcellular location is the cytoplasm. The catalysed reaction is L-glutamate 5-semialdehyde + phosphate + NADP(+) = L-glutamyl 5-phosphate + NADPH + H(+). It functions in the pathway amino-acid biosynthesis; L-proline biosynthesis; L-glutamate 5-semialdehyde from L-glutamate: step 2/2. In terms of biological role, catalyzes the NADPH-dependent reduction of L-glutamate 5-phosphate into L-glutamate 5-semialdehyde and phosphate. The product spontaneously undergoes cyclization to form 1-pyrroline-5-carboxylate. The chain is Gamma-glutamyl phosphate reductase from Dictyoglomus turgidum (strain DSM 6724 / Z-1310).